A 193-amino-acid chain; its full sequence is MEERRPGMGVIVPAGEAGRTTVEGYDPKLHDPYFDGVSQRLADKGFVTAAADDLITWARTGSLMWMTFGLACCAVEMMQASMPRYDLERYGFAPRASPRQSDVMIVAGTLVNKMAPALRKVYDQMPEPRYVISMGSCANGGGYYYFSYSTVRGCDRVVPVDVYVPGCPPTAEALVYGVLQLQKKIRRTGTIVR.

[4Fe-4S] cluster-binding residues include Cys-72, Cys-73, Cys-137, and Cys-167.

This sequence belongs to the complex I 20 kDa subunit family. As to quaternary structure, NDH-1 is composed of 14 different subunits. Subunits NuoB, C, D, E, F, and G constitute the peripheral sector of the complex. [4Fe-4S] cluster serves as cofactor.

It localises to the cell inner membrane. The catalysed reaction is a quinone + NADH + 5 H(+)(in) = a quinol + NAD(+) + 4 H(+)(out). Its function is as follows. NDH-1 shuttles electrons from NADH, via FMN and iron-sulfur (Fe-S) centers, to quinones in the respiratory chain. The immediate electron acceptor for the enzyme in this species is believed to be ubiquinone. Couples the redox reaction to proton translocation (for every two electrons transferred, four hydrogen ions are translocated across the cytoplasmic membrane), and thus conserves the redox energy in a proton gradient. The polypeptide is NADH-quinone oxidoreductase subunit B (Phenylobacterium zucineum (strain HLK1)).